Consider the following 129-residue polypeptide: Protein Turandot A1 (129 aa).

Positions 1–21 (MNSSTALMCFALLLISPLCMG) are cleaved as a signal peptide. Asn49 is a glycosylation site (N-linked (GlcNAc...) asparagine).

This sequence belongs to the Turandot family.

It localises to the secreted. Its function is as follows. A humoral factor that plays a role in stress tolerance; gives increased resistance to the lethal effects of bacterial challenge and stress. Regulated by the JAK/STAT pathway and NF-KB-like Relish pathway in the fat body, upd3 in the hemocytes and Mekk1 in response to septic injury and consequent immune response. This is Protein Turandot A1 (TotA1) from Drosophila simulans (Fruit fly).